The sequence spans 563 residues: Membrane protein insertase YidC (563 aa).

Residues 1–21 (MDIKRTILIVALAIVTYVGVL) traverse the membrane as a helical segment. The disordered stretch occupies residues 43-62 (APGIPDTAAGTNGSASADVP). The next 5 membrane-spanning stretches (helical) occupy residues 344–364 (LELTVDYGFLWFIAQPIFWLL), 370–390 (ILGNWGWSIIVLTMLIKGLFF), 440–460 (LGGCLPILVQMPVFLSLYWVL), 471–491 (WILWITDLSIKDPFFILPIIM), and 518–538 (PIIFTFFFLWFPAGLVLYWVV).

It belongs to the OXA1/ALB3/YidC family. Type 1 subfamily. Interacts with the Sec translocase complex via SecD. Specifically interacts with transmembrane segments of nascent integral membrane proteins during membrane integration.

The protein resides in the cell inner membrane. Its function is as follows. Required for the insertion and/or proper folding and/or complex formation of integral membrane proteins into the membrane. Involved in integration of membrane proteins that insert both dependently and independently of the Sec translocase complex, as well as at least some lipoproteins. Aids folding of multispanning membrane proteins. The sequence is that of Membrane protein insertase YidC from Pseudomonas savastanoi pv. phaseolicola (strain 1448A / Race 6) (Pseudomonas syringae pv. phaseolicola (strain 1448A / Race 6)).